The sequence spans 468 residues: Glutamate--tRNA ligase 2 (468 aa).

The 'HIGH' region motif lies at 11–21; that stretch reads PSPTGFLHIGG. The 'KMSKS' region motif lies at 239–243; that stretch reads KLSKR. Residue lysine 242 participates in ATP binding.

It belongs to the class-I aminoacyl-tRNA synthetase family. Glutamate--tRNA ligase type 1 subfamily. Monomer.

The protein resides in the cytoplasm. It catalyses the reaction tRNA(Glu) + L-glutamate + ATP = L-glutamyl-tRNA(Glu) + AMP + diphosphate. Catalyzes the attachment of glutamate to tRNA(Glu) in a two-step reaction: glutamate is first activated by ATP to form Glu-AMP and then transferred to the acceptor end of tRNA(Glu). The sequence is that of Glutamate--tRNA ligase 2 from Ruegeria pomeroyi (strain ATCC 700808 / DSM 15171 / DSS-3) (Silicibacter pomeroyi).